We begin with the raw amino-acid sequence, 230 residues long: NAD(P)H-hydrate epimerase (230 aa).

The 208-residue stretch at 11–218 (AIDVDQELFT…ALQRKYELNL (208 aa)) folds into the YjeF N-terminal domain. 61–65 (NNGGD) is a (6S)-NADPHX binding site. Asparagine 62 and aspartate 126 together coordinate K(+). (6S)-NADPHX-binding positions include 130–136 (GFSFKPP) and aspartate 159. K(+) is bound at residue serine 162.

Belongs to the NnrE/AIBP family. It depends on K(+) as a cofactor.

It carries out the reaction (6R)-NADHX = (6S)-NADHX. It catalyses the reaction (6R)-NADPHX = (6S)-NADPHX. Functionally, catalyzes the epimerization of the S- and R-forms of NAD(P)HX, a damaged form of NAD(P)H that is a result of enzymatic or heat-dependent hydration. This is a prerequisite for the S-specific NAD(P)H-hydrate dehydratase to allow the repair of both epimers of NAD(P)HX. The polypeptide is NAD(P)H-hydrate epimerase (Drosophila erecta (Fruit fly)).